Consider the following 355-residue polypeptide: Probable L-aspartate decarboxylase (355 aa).

N6-(pyridoxal phosphate)lysine is present on lysine 210.

This sequence belongs to the group II decarboxylase family. MfnA subfamily. It depends on pyridoxal 5'-phosphate as a cofactor.

It carries out the reaction L-aspartate + H(+) = beta-alanine + CO2. Its pathway is cofactor biosynthesis; coenzyme A biosynthesis. In terms of biological role, catalyzes the decarboxylation of L-aspartate to produce beta-alanine. The chain is Probable L-aspartate decarboxylase from Halobacterium salinarum (strain ATCC 29341 / DSM 671 / R1).